Reading from the N-terminus, the 256-residue chain is (E)-benzylidenesuccinyl-CoA hydratase (256 aa).

Glu110 functions as the Nucleophile in the catalytic mechanism. Glu130 serves as the catalytic Proton acceptor.

It belongs to the enoyl-CoA hydratase/isomerase family. Homotrimer.

It catalyses the reaction (2S)-[(R)-hydroxy(phenyl)methyl]succinyl-CoA = (E)-2-benzylidenesuccinyl-CoA + H2O. The protein operates within xenobiotic degradation; toluene degradation. In terms of biological role, involved in an anaerobic toluene degradation pathway. Catalyzes the hydration of (E)-2-benzylidenesuccinyl-CoA to the corresponding alcohol intermediate, 2-(alpha-hydroxybenzyl)succinyl-CoA. Also accepts the N-acetylcysteamine (NAC) thioester of (E)-benzylidenesuccinate. In Thauera aromatica, this protein is (E)-benzylidenesuccinyl-CoA hydratase.